The primary structure comprises 350 residues: tRNA pseudouridine synthase D (350 aa).

Asp85 acts as the Nucleophile in catalysis. The 151-residue stretch at 160 to 310 (GVINYFGEQR…EAARRTILLR (151 aa)) folds into the TRUD domain.

Belongs to the pseudouridine synthase TruD family.

It carries out the reaction uridine(13) in tRNA = pseudouridine(13) in tRNA. Its function is as follows. Responsible for synthesis of pseudouridine from uracil-13 in transfer RNAs. This Idiomarina loihiensis (strain ATCC BAA-735 / DSM 15497 / L2-TR) protein is tRNA pseudouridine synthase D.